A 276-amino-acid polypeptide reads, in one-letter code: C-type lectin domain family 12 member B (276 aa).

Topologically, residues 1–43 (MSEEVTYATLTFQDSAGARNNRDGNNLRKRGHPAPSPIWRHAA) are cytoplasmic. The short motif at 5 to 10 (VTYATL) is the ITIM motif element. Y7 carries the post-translational modification Phosphotyrosine. A helical; Signal-anchor for type II membrane protein membrane pass occupies residues 44 to 64 (LGLVTLCLMLLIGLVTLGMMF). The Extracellular portion of the chain corresponds to 65–276 (LQISNDINSD…AAPVKTEDLD (212 aa)). Residues N91, N176, and N237 are each glycosylated (N-linked (GlcNAc...) asparagine). Residues 150 to 264 (YQNSCYYFTT…CSAEIFWICE (115 aa)) form the C-type lectin domain. 2 cysteine pairs are disulfide-bonded: C172/C263 and C242/C255.

Homodimer. Interacts (via ITIM motif) with PTPN6. Interacts (via ITIM motif) with PTPN11; this interaction triggers dephosphorylation and activation of PTPN11. N-glycosylated. Detected in colon, heart, kidney, liver, lung, mammary gland, ovary, spleen and testis. Expressed in melanocytes (at protein level).

The protein resides in the cell membrane. Its function is as follows. Inhibitory receptor postulated to negatively regulate immune and non-immune functions. Upon phosphorylation, recruits SH2 domain-containing PTPN6 and PTPN11 phosphatases to its ITIM motif and antagonizes activation signals. Although it inhibits KLRK1/NKG2D-mediated signaling, it does not bind known ligands of KLRK1/NKG2D and therefore is not its inhibitory counterpart. May limit activation of myeloid cell subsets in response to infection or tissue inflammation. May protect target cells against natural killer cell-mediated lysis. May negatively regulate cell cycle and differentiation of melanocytes via inactivation of STAT3. The sequence is that of C-type lectin domain family 12 member B from Homo sapiens (Human).